The sequence spans 147 residues: Basic phospholipase A2 beta-bungarotoxin A1 chain (147 aa).

An N-terminal signal peptide occupies residues 1–19; the sequence is MYPAHLLILSAVCVSLLGA. Positions 20–27 are excised as a propeptide; sequence ANIPPHPL. Cystine bridges form between C54–C146, C56–C72, C71–C127, C78–C120, C88–C113, and C106–C118. Residues Y55, G57, and G59 each coordinate Ca(2+). H75 is an active-site residue. D76 provides a ligand contact to Ca(2+). The active site involves D121.

It belongs to the phospholipase A2 family. Group I subfamily. D49 sub-subfamily. In terms of assembly, heterodimer; disulfide-linked. The A chains have phospholipase A2 activity and the B chains show homology with the basic protease inhibitors. It depends on Ca(2+) as a cofactor. In terms of tissue distribution, expressed by the venom gland.

It is found in the secreted. The catalysed reaction is a 1,2-diacyl-sn-glycero-3-phosphocholine + H2O = a 1-acyl-sn-glycero-3-phosphocholine + a fatty acid + H(+). Its function is as follows. Snake venom phospholipase A2 (PLA2) that inhibits neuromuscular transmission by blocking acetylcholine release from the nerve termini. PLA2 catalyzes the calcium-dependent hydrolysis of the 2-acyl groups in 3-sn-phosphoglycerides. The sequence is that of Basic phospholipase A2 beta-bungarotoxin A1 chain from Bungarus caeruleus (Indian krait).